The primary structure comprises 166 residues: uncharacterized protein (166 aa).

In terms of domain architecture, HTH asnC-type spans 3-65; it reads LTEKETEILE…IDWRKVDGHE (63 aa). A DNA-binding region (H-T-H motif) is located at residues 22–41; the sequence is LETIAKMAGIPVNEVKTIID.

This is an uncharacterized protein from Bacillus subtilis (strain 168).